A 97-amino-acid polypeptide reads, in one-letter code: Secreted LysM effector Mg1LysM (97 aa).

A signal peptide spans M1–A18. Residues Q37–I84 enclose the LysM domain. Positions 44, 48, 74, and 76 each coordinate chitin.

Belongs to the secreted LysM effector family. In terms of assembly, forms homodimers in a chitin-independent manner through interactions at the N-termini of Mg1LysM monomers. Homodimers are further polymerized in a chitin-dependent manner.

Its subcellular location is the secreted. It is found in the cell wall. Secreted effector that enables the plant pathogenic fungus to manipulate host defenses for successful infection. Binds chitin but not cellulose or xylan. Chitin-induced polymerization of homodimers forms a contiguous Mg1LysM highly oligomeric super-complexe that is anchored to the chitin in the fungal cell wall to prevent hydrolysis by host chitinases. In Zymoseptoria tritici (strain ST99CH_3D7), this protein is Secreted LysM effector Mg1LysM.